A 198-amino-acid polypeptide reads, in one-letter code: Recombination protein RecR (198 aa).

The C4-type zinc finger occupies 57-72 (CSICGNLTDQDPCAIC). Residues 80–175 (STILIVEDSR…KVTRLARGLA (96 aa)) enclose the Toprim domain.

Belongs to the RecR family.

In terms of biological role, may play a role in DNA repair. It seems to be involved in an RecBC-independent recombinational process of DNA repair. It may act with RecF and RecO. In Streptococcus suis (strain 05ZYH33), this protein is Recombination protein RecR.